The primary structure comprises 335 residues: tRNA N6-adenosine threonylcarbamoyltransferase (335 aa).

A divalent metal cation is bound by residues H109, H113, and Y130. Substrate is bound by residues 130 to 134 (YVSGG), D162, G177, E181, and N266. D294 lines the a divalent metal cation pocket.

Belongs to the KAE1 / TsaD family. As to quaternary structure, component of the EKC/KEOPS complex composed of at least GON7, TP53RK, TPRKB, OSGEP and LAGE3; the whole complex dimerizes. Requires a divalent metal cation as cofactor.

It localises to the cytoplasm. It is found in the nucleus. It catalyses the reaction L-threonylcarbamoyladenylate + adenosine(37) in tRNA = N(6)-L-threonylcarbamoyladenosine(37) in tRNA + AMP + H(+). In terms of biological role, component of the EKC/KEOPS complex that is required for the formation of a threonylcarbamoyl group on adenosine at position 37 (t(6)A37) in tRNAs that read codons beginning with adenine. The complex is probably involved in the transfer of the threonylcarbamoyl moiety of threonylcarbamoyl-AMP (TC-AMP) to the N6 group of A37. OSGEP likely plays a direct catalytic role in this reaction, but requires other protein(s) of the complex to fulfill this activity. The protein is tRNA N6-adenosine threonylcarbamoyltransferase of Bos taurus (Bovine).